The primary structure comprises 437 residues: MNLSLFTLALVACYSSQLAAAHTVFTTLFVNDVSQGDGTCVRMPSDPSTATFPINDLDSDSMACGFNGTRGVERVCAVNQTAKLSFLFREYADASQQGAIDPNHKGPCAVYMKRVASAINDTAVGSGWFKIWDEGYDNSTQKWCTEKLIQNNGYLSINIPSDLAGGYYLARPELLALHQADKNPPNPQFYTGCAQIYLDSAETAIPKDTVNIPGYVNIHSPSVLYNIWNPPPTPYTMAGPAPYQPGISSISNTTGSKAAKFSAYTAQQNEGLLPQDAAITNANWWGVEVASYTTEAGCWDASSDCWNQTTVCYDCAPPTGDKGCREWEAHCTAIQKGCEGGSFTGPPVIVKTEGAMTMAMTATIAPAAEQTGGVYAASSTVVSVGSLGVSEDGKCGDGNGQTCKGSLLGECCSQVGYCGSSESYCGVGCQGNFGVCG.

Residues 1-21 (MNLSLFTLALVACYSSQLAAA) form the signal peptide. H22 contributes to the Cu(2+) binding site. The cysteines at positions 64 and 193 are disulfide-linked. N67 and N79 each carry an N-linked (GlcNAc...) asparagine glycan. H104 is a binding site for Cu(2+). N-linked (GlcNAc...) asparagine glycans are attached at residues N120 and N138. The O2 site is built by H178 and Q188. Y190 is a binding site for Cu(2+). N-linked (GlcNAc...) asparagine glycosylation is found at N252 and N307. Positions 392 to 437 (DGKCGDGNGQTCKGSLLGECCSQVGYCGSSESYCGVGCQGNFGVCG) constitute a Chitin-binding type-1 domain. 4 disulfide bridges follow: C395–C412, C403–C418, C411–C425, and C429–C436.

This sequence belongs to the polysaccharide monooxygenase AA9 family. It depends on Cu(2+) as a cofactor.

The protein resides in the secreted. It catalyses the reaction [(1-&gt;4)-beta-D-glucosyl]n+m + reduced acceptor + O2 = 4-dehydro-beta-D-glucosyl-[(1-&gt;4)-beta-D-glucosyl]n-1 + [(1-&gt;4)-beta-D-glucosyl]m + acceptor + H2O.. In terms of biological role, lytic polysaccharide monooxygenase (LPMO) that depolymerizes crystalline and amorphous polysaccharides via the oxidation of scissile alpha- or beta-(1-4)-glycosidic bonds, yielding C1 and C4 oxidation products. Catalysis by LPMOs requires the reduction of the active-site copper from Cu(II) to Cu(I) by a reducing agent and H(2)O(2) or O(2) as a cosubstrate. The sequence is that of AA9 family lytic polysaccharide monooxygenase H from Botryotinia fuckeliana (strain B05.10) (Noble rot fungus).